A 320-amino-acid polypeptide reads, in one-letter code: Calnexin-independence factor 1 (320 aa).

A disordered region spans residues 16 to 36; it reads SAETSVGEKQPKRKRSEVRAE.

The protein resides in the nucleus. It localises to the nucleolus. Its function is as follows. Induces a stably inheritable state of calnexin independence called the Cin state when overexpressed. This is Calnexin-independence factor 1 (cif1) from Schizosaccharomyces pombe (strain 972 / ATCC 24843) (Fission yeast).